The sequence spans 713 residues: Undecaprenyl-diphosphooligosaccharide--protein glycotransferase (713 aa).

The Cytoplasmic segment spans residues 1 to 11; the sequence is MLKKEYLKNPY. Residues 12–35 form a helical membrane-spanning segment; it reads LVLFAMIILAYVFSVLCRFYWIWW. At 36–96 the chain is on the periplasmic side; sequence ASEFNEYFFN…YWLYKITPFS (61 aa). The short motif at 52–54 is the DXD motif 1 element; the sequence is SND. Aspartate 54 contacts Mn(2+). A helical membrane pass occupies residues 97–122; it reads FESIILYMSTFLSSLVVIPIILLANE. At 123–125 the chain is on the cytoplasmic side; it reads YKR. A helical membrane pass occupies residues 126–144; that stretch reads PLMGFVAALLASVANSYYN. Topologically, residues 145–152 are periplasmic; that stretch reads RTMSGYYD. Aspartate 152 is a binding site for Mn(2+). The short motif at 152–154 is the DXD motif 2 element; the sequence is DTD. A helical transmembrane segment spans residues 153–174; the sequence is TDMLVIVLPMFILFFMVRMILK. At 175–176 the chain is on the cytoplasmic side; it reads KD. Residues 177-192 form a helical membrane-spanning segment; sequence FFSLIALPLFIGIYLW. Topologically, residues 193–197 are periplasmic; the sequence is WYPSS. 194–196 serves as a coordination point for [alpha-D-GalNAc-(1-&gt;4)]2-[beta-D-Glc-(1-&gt;3)]-[alpha-D-GalNAc-(1-&gt;4)]2-alpha-D-GalNAc-(1-&gt;3)-alpha-D-diNAcBac-tri-trans,hepta-cis-undecaprenyl diphosphate; that stretch reads YPS. The helical transmembrane segment at 198 to 215 threads the bilayer; that stretch reads YTLNVALIGLFLIYTLIF. The Cytoplasmic portion of the chain corresponds to 216–220; that stretch reads HRKEK. The chain crosses the membrane as a helical span at residues 221–233; sequence IFYIAVILSSLTL. Over 234–237 the chain is Periplasmic; sequence SNIA. A helical transmembrane segment spans residues 238-254; that stretch reads WFYQSAIIVILFALFAL. Over 255-260 the chain is Cytoplasmic; sequence EQKRLN. Residues 261–278 traverse the membrane as a helical segment; the sequence is FMIIGILGSATLIFLILS. The Periplasmic portion of the chain corresponds to 279–324; that stretch reads GGVDPILYQLKFYIFRNDESANLTQGFMYFNVNQTIQEVENVDFSE. Tyrosine 291 lines the [alpha-D-GalNAc-(1-&gt;4)]2-[beta-D-Glc-(1-&gt;3)]-[alpha-D-GalNAc-(1-&gt;4)]2-alpha-D-GalNAc-(1-&gt;3)-alpha-D-diNAcBac-tri-trans,hepta-cis-undecaprenyl diphosphate pocket. The TIXE motif motif lies at 313–316; the sequence is TIQE. Mn(2+) is bound at residue glutamate 316. The chain crosses the membrane as a helical span at residues 325–347; sequence FMRRISGSEIVFLFSLFGFVWLL. Topologically, residues 348–352 are cytoplasmic; that stretch reads RKHKS. The chain crosses the membrane as a helical span at residues 353–369; sequence MIMALPILVLGFLALKG. Topologically, residues 370–373 are periplasmic; it reads GLRF. Residue arginine 372 participates in [alpha-D-GalNAc-(1-&gt;4)]2-[beta-D-Glc-(1-&gt;3)]-[alpha-D-GalNAc-(1-&gt;4)]2-alpha-D-GalNAc-(1-&gt;3)-alpha-D-diNAcBac-tri-trans,hepta-cis-undecaprenyl diphosphate binding. A helical membrane pass occupies residues 374 to 396; the sequence is TIYSVPVMALGFGFLLSEFKAIL. Residues 397 to 406 are Cytoplasmic-facing; it reads VKKYSQLTSN. Residues 407 to 427 traverse the membrane as a helical segment; sequence VCIVFATILTLAPVFIHIYNY. At 428–713 the chain is on the periplasmic side; sequence KAPTVFSQNE…RDAKVFKLKI (286 aa). Positions 457–459 are interacts with target acceptor peptide in protein substrate; the sequence is WWD. The short motif at 457-461 is the WWDYG motif element; it reads WWDYG. Tyrosine 462 contacts [alpha-D-GalNAc-(1-&gt;4)]2-[beta-D-Glc-(1-&gt;3)]-[alpha-D-GalNAc-(1-&gt;4)]2-alpha-D-GalNAc-(1-&gt;3)-alpha-D-diNAcBac-tri-trans,hepta-cis-undecaprenyl diphosphate. An N-linked (DATDGlc) asparagine glycan is attached at asparagine 534. Residues 568–575 carry the MI motif motif; the sequence is MSLIFSTV.

It belongs to the STT3 family. The cofactor is Mg(2+). Mn(2+) is required as a cofactor.

Its subcellular location is the cell inner membrane. The catalysed reaction is tritrans,heptacis-undecaprenyl diphosphooligosaccharide + [protein]-L-asparagine = tritrans,heptacis-undecaprenyl diphosphate + a glycoprotein with the oligosaccharide chain attached by N-beta-D-glycosyl linkage to protein L-asparagine.. The protein operates within protein modification; protein glycosylation. Oligosaccharyltransferase that catalyzes the transfer of a preassembled heptasaccharide from a lipid donor to an asparagine residue in nascent polypeptide chains, affording a beta-linked glycan to the asparagine side chain of target proteins. Functionally, oligosaccharyl transferase (OST) that catalyzes the initial transfer of a defined glycan (GalNAc(2)GlcGalNAc(3)Bac(NAc)(2) in eubacteria, where Bac(NAc)(2) is di-N-acetyl bacillosamine) from the lipid carrier undecaprenol-pyrophosphate to an asparagine residue within an Asp/Glu-Asn-X-Ser/Thr consensus motif in nascent polypeptide chains, the first step in protein N-glycosylation. The protein is Undecaprenyl-diphosphooligosaccharide--protein glycotransferase (pglB) of Campylobacter jejuni (strain RM1221).